Here is a 364-residue protein sequence, read N- to C-terminus: NAD(P)H-quinone oxidoreductase subunit 1, chloroplastic (364 aa).

6 helical membrane-spanning segments follow: residues 27-47 (IWLL…VLVI), 98-118 (FSVG…VIPF), 127-147 (ISIG…GLLM), 255-275 (GLFY…VTVL), 301-321 (VFGS…FLFV), and 337-357 (LLNL…LLTT).

This sequence belongs to the complex I subunit 1 family. In terms of assembly, NDH is composed of at least 16 different subunits, 5 of which are encoded in the nucleus.

Its subcellular location is the plastid. It localises to the chloroplast thylakoid membrane. It carries out the reaction a plastoquinone + NADH + (n+1) H(+)(in) = a plastoquinol + NAD(+) + n H(+)(out). The catalysed reaction is a plastoquinone + NADPH + (n+1) H(+)(in) = a plastoquinol + NADP(+) + n H(+)(out). Its function is as follows. NDH shuttles electrons from NAD(P)H:plastoquinone, via FMN and iron-sulfur (Fe-S) centers, to quinones in the photosynthetic chain and possibly in a chloroplast respiratory chain. The immediate electron acceptor for the enzyme in this species is believed to be plastoquinone. Couples the redox reaction to proton translocation, and thus conserves the redox energy in a proton gradient. This chain is NAD(P)H-quinone oxidoreductase subunit 1, chloroplastic, found in Illicium oligandrum (Star anise).